The primary structure comprises 84 residues: Hirudin-HM2 (84 aa).

A signal peptide spans 1–20; the sequence is MFSLKLFVVFLAVCICVSQA. The segment at 21 to 23 is interaction with thrombin active site; sequence VSY. 3 cysteine pairs are disulfide-bonded: Cys26–Cys34, Cys36–Cys48, and Cys42–Cys57. The tract at residues 53–84 is disordered; sequence SGNQCVHGEGTPKPKSQTEGDFEEIPDEDILN. Thr63 carries an O-linked (GalNAc...) threonine glycan. Positions 72–84 are enriched in acidic residues; the sequence is GDFEEIPDEDILN. Residues 73 to 84 are interaction with fibrinogen-binding exosite of thrombin; that stretch reads DFEEIPDEDILN.

This sequence belongs to the protease inhibitor I14 (hirudin) family.

It is found in the secreted. Functionally, hirudin is a potent thrombin-specific protease inhibitor. It forms a stable non-covalent complex with alpha-thrombin, thereby abolishing its ability to cleave fibrinogen. The polypeptide is Hirudin-HM2 (Hirudinaria manillensis (Asian medical leech)).